The following is a 421-amino-acid chain: Alpha-tubulin N-acetyltransferase 1 (421 aa).

The region spanning 1 to 190 (MEFPFDVDAL…NNFVIFEGFF (190 aa)) is the N-acetyltransferase domain. The residue at position 56 (Lys-56) is an N6-acetyllysine; by autocatalysis. 124 to 137 (FYIHESVQRHGHGR) is a binding site for acetyl-CoA. Lys-146 is subject to N6-acetyllysine; by autocatalysis. An acetyl-CoA-binding site is contributed by 160 to 169 (SQKLLKFLNK). Residues 196–235 (PPAPSLRATRHSRAAAVDPTPAAPARKLPPKRAEGDIKPY) form a disordered region. Positions 209–221 (AAAVDPTPAAPAR) are enriched in low complexity. The span at 226–235 (KRAEGDIKPY) shows a compositional bias: basic and acidic residues. An N6-acetyllysine; by autocatalysis mark is found at Lys-233 and Lys-244. The disordered stretch occupies residues 252–284 (PLNRAPRRATPPAHPPPRSSSLGNSPERGPLRP). Phosphoserine occurs at positions 272 and 276. Arg-305 is modified (asymmetric dimethylarginine). The disordered stretch occupies residues 306-402 (LLLAADPGGS…PAQSWTVGGD (97 aa)). Position 315 is a phosphoserine (Ser-315). Arg-323 is modified (omega-N-methylarginine). Residues 342 to 354 (VNSSSPNTGNQDS) are compositionally biased toward polar residues. Over residues 355 to 367 (KQGEQETKNRSAS) the composition is skewed to basic and acidic residues.

The protein belongs to the acetyltransferase ATAT1 family. In terms of assembly, component of the BBSome complex. Interacts with AP2 alpha-adaptins, including AP2A2, but not with AP1 gamma-adaptin (AP1G1/AP1G2); this interaction is required for efficient alpha-tubulin acetylation, hence clathrin-coated pits are sites of microtubule acetylation. Post-translationally, autoacetylation strongly increases tubulin acetylation.

It localises to the cytoplasm. Its subcellular location is the membrane. The protein resides in the clathrin-coated pit. The protein localises to the cell junction. It is found in the focal adhesion. It localises to the cell projection. Its subcellular location is the axon. The protein resides in the cytoskeleton. The protein localises to the spindle. The catalysed reaction is L-lysyl-[alpha-tubulin] + acetyl-CoA = N(6)-acetyl-L-lysyl-[alpha-tubulin] + CoA + H(+). Its function is as follows. Specifically acetylates 'Lys-40' in alpha-tubulin on the lumenal side of microtubules. Promotes microtubule destabilization and accelerates microtubule dynamics; this activity may be independent of acetylation activity. Acetylates alpha-tubulin with a slow enzymatic rate, due to a catalytic site that is not optimized for acetyl transfer. Enters the microtubule through each end and diffuses quickly throughout the lumen of microtubules. Acetylates only long/old microtubules because of its slow acetylation rate since it does not have time to act on dynamically unstable microtubules before the enzyme is released. Required for normal sperm flagellar function. Promotes directional cell locomotion and chemotaxis, through AP2A2-dependent acetylation of alpha-tubulin at clathrin-coated pits that are concentrated at the leading edge of migrating cells. May facilitate primary cilium assembly. This is Alpha-tubulin N-acetyltransferase 1 from Homo sapiens (Human).